Here is a 318-residue protein sequence, read N- to C-terminus: NADH-ubiquinone oxidoreductase chain 1 (318 aa).

8 consecutive transmembrane segments (helical) span residues 2–22 (FLIN…FLTL), 69–89 (FLFT…WAPL), 102–122 (LLFI…SGWA), 146–166 (MTTI…TAFA), 171–191 (HLWL…STLA), 222–242 (LFFM…VILF), 253–273 (EIST…FLWV), and 294–314 (LPLT…LACI).

The protein belongs to the complex I subunit 1 family. In terms of assembly, core subunit of respiratory chain NADH dehydrogenase (Complex I) which is composed of 45 different subunits.

It localises to the mitochondrion inner membrane. The enzyme catalyses a ubiquinone + NADH + 5 H(+)(in) = a ubiquinol + NAD(+) + 4 H(+)(out). In terms of biological role, core subunit of the mitochondrial membrane respiratory chain NADH dehydrogenase (Complex I) which catalyzes electron transfer from NADH through the respiratory chain, using ubiquinone as an electron acceptor. Essential for the catalytic activity and assembly of complex I. In Elephas maximus (Indian elephant), this protein is NADH-ubiquinone oxidoreductase chain 1 (MT-ND1).